The sequence spans 299 residues: HTH-type transcriptional regulator ArgP (299 aa).

The region spanning 2–58 (FDYKLLSALAAVIEQAGFERAAQVLGLSQSAISQRIKLLEARVGQPVLVRVTPPAPT) is the HTH lysR-type domain. The H-T-H motif DNA-binding region spans 19–38 (FERAAQVLGLSQSAISQRIK).

This sequence belongs to the LysR transcriptional regulatory family. Homodimer.

Functionally, controls the transcription of genes involved in arginine and lysine metabolism. This Pseudomonas fluorescens (strain ATCC BAA-477 / NRRL B-23932 / Pf-5) protein is HTH-type transcriptional regulator ArgP.